The following is a 92-amino-acid chain: Progonadoliberin-1 (92 aa).

The signal sequence occupies residues 1 to 23; the sequence is MEKSRKILVGVLLFTASVAICLA. The residue at position 24 (Q24) is a Pyrrolidone carboxylic acid. A Glycine amide modification is found at G33.

This sequence belongs to the GnRH family.

The protein resides in the secreted. In terms of biological role, stimulates the secretion of gonadotropins. This is Progonadoliberin-1 (GNRH1) from Gallus gallus (Chicken).